The chain runs to 1299 residues: GRB10-interacting GYF protein 2 (1299 aa).

Ala-2 carries the N-acetylalanine modification. Phosphoserine occurs at positions 19, 26, and 30. The short motif at 40–50 (DYRYGREEMLA) is the 4EHP-binding motif element. Omega-N-methylarginine is present on residues Arg-107, Arg-118, and Arg-120. The tract at residues 112–131 (TVVGAPRGRSSSRGRGRGRG) is disordered. A Phosphoserine modification is found at Ser-139. Disordered stretches follow at residues 147 to 195 (FGRG…RKHE), 214 to 247 (EDED…GWRE), and 266 to 433 (RGYR…VADV). An Omega-N-methylarginine modification is found at Arg-149. The span at 151–182 (GGREMHRSQSWEERGDRRFEKPGRKDVGRPNF) shows a compositional bias: basic and acidic residues. A phosphoserine mark is found at Ser-160, Ser-189, and Ser-236. Basic and acidic residues predominate over residues 225–247 (SRRDGERWRPHSPDGPRSAGWRE). A DDX6 binding motif motif is present at residues 280 to 310 (DDRDSLPEWCLEDAEEEMGTFDSSGAFLSLK). The span at 289 to 298 (CLEDAEEEMG) shows a compositional bias: acidic residues. 2 stretches are compositionally biased toward basic and acidic residues: residues 312-329 (VQKE…RPVD) and 338-363 (EGSH…DRVG). Polar residues predominate over residues 369 to 392 (ETPQTSSSSARPGTPSDHQSQEAS). Thr-382 bears the Phosphothreonine mark. Ser-388 carries the phosphoserine modification. Basic and acidic residues predominate over residues 393-414 (QFERKDEPKTEQTEKAEEETRM). Residues 533–581 (MQKWYYKDPQGEIQGPFNNQEMAEWFQAGYFTMSLLVKRACDESFQPLG) enclose the GYF domain. The tract at residues 547–563 (GPFNNQEMAEWFQAGYF) is required for GRB10-binding. The residue at position 593 (Ser-593) is a Phosphoserine. Disordered regions lie at residues 733–793 (KAAK…QEEA), 845–866 (EEAA…ENRL), 872–891 (AARL…EVQR), 917–936 (QLAQ…SNTT), 957–997 (ERQL…KPSG), 1009–1048 (EARQ…VWGS), and 1084–1112 (KEVG…NRQN). Positions 860–919 (RLEENRLRMEEEAARLRHEEEERKRKELEVQRQKELMRQRQQQQEALRRLQQQQQQQQLA) are required for interaction with SARS-CoV-2 non-structural protein 2 (nsp2). Positions 924–936 (PSSSTWGQQSNTT) are enriched in polar residues. Residues 957 to 972 (ERQLREEQRRQQRELM) are compositionally biased toward basic and acidic residues. Ser-993 carries the post-translational modification Phosphoserine. Over residues 1013–1025 (MQKQQQQQQQHQQ) the composition is skewed to low complexity. Residues 1026 to 1048 (PNRARNNTHSNLHTSIGNSVWGS) are compositionally biased toward polar residues. Residues 1090 to 1104 (NSTNKNKNNASLSKS) show a composition bias toward low complexity. Residue Lys-1123 forms a Glycyl lysine isopeptide (Lys-Gly) (interchain with G-Cter in SUMO2) linkage. Disordered stretches follow at residues 1195–1230 (RAKQ…QQDS) and 1247–1271 (QSNN…KMVR). The segment covering 1202-1217 (QQRQQQQLPQQQQQQP) has biased composition (low complexity). Position 1284 is a phosphoserine (Ser-1284).

The protein belongs to the GIGYF family. As to quaternary structure, component of the 4EHP-GYF2 complex, at least composed of EIF4E2, GIGYF2 and ZNF598. Interacts (via the 4EHP-binding motif) with EIF4E2; the interaction is direct. Interacts with ZFP36/TTP (via P-P-P-P-G repeats); the interaction is direct. Interacts with GRB10. Interacts (via DDX6 motif) with DDX6 (via RecA-like domain 2). (Microbial infection) Interacts with SARS coronavirus-2/SARS-CoV-2 non-structural protein 2 (nsp2); the interaction enhances GIGYF2 binding to EIF4E2.

Functionally, key component of the 4EHP-GYF2 complex, a multiprotein complex that acts as a repressor of translation initiation. In the 4EHP-GYF2 complex, acts as a factor that bridges EIF4E2 to ZFP36/TTP, linking translation repression with mRNA decay. Also recruits and bridges the association of the 4EHP complex with the decapping effector protein DDX6, which is required for the ZFP36/TTP-mediated down-regulation of AU-rich mRNA. May act cooperatively with GRB10 to regulate tyrosine kinase receptor signaling, including IGF1 and insulin receptors. In association with EIF4E2, assists ribosome-associated quality control (RQC) by sequestering the mRNA cap, blocking ribosome initiation and decreasing the translational load on problematic messages. Part of a pathway that works in parallel to RQC-mediated degradation of the stalled nascent polypeptide. GIGYF2 and EIF4E2 work downstream and independently of ZNF598, which seems to work as a scaffold that can recruit them to faulty mRNA even if alternative recruitment mechanisms may exist. (Microbial infection) Upon SARS coronavirus-2/SARS-CoV-2 infection, the interaction with non-structural protein 2 (nsp2) enhances GIGYF2 binding to EIF4E2 and increases repression of translation initiation of genes involved in antiviral innate immune response such as IFNB1. The sequence is that of GRB10-interacting GYF protein 2 from Homo sapiens (Human).